The following is a 318-amino-acid chain: Porphobilinogen deaminase (318 aa).

Residue cysteine 241 is modified to S-(dipyrrolylmethanemethyl)cysteine.

Belongs to the HMBS family. In terms of assembly, monomer. The cofactor is dipyrromethane.

The catalysed reaction is 4 porphobilinogen + H2O = hydroxymethylbilane + 4 NH4(+). The protein operates within porphyrin-containing compound metabolism; protoporphyrin-IX biosynthesis; coproporphyrinogen-III from 5-aminolevulinate: step 2/4. Tetrapolymerization of the monopyrrole PBG into the hydroxymethylbilane pre-uroporphyrinogen in several discrete steps. The protein is Porphobilinogen deaminase of Geobacter sp. (strain M21).